We begin with the raw amino-acid sequence, 526 residues long: NAD(P)H-quinone oxidoreductase subunit 2 (526 aa).

Helical transmembrane passes span 16–36 (ILPESIVILTLIVVLVGDLIV), 43–63 (WIPYAAIAGLLGSVFALYLGW), 80–100 (LSILFRGIIVLSTAFTIMMSV), 107–127 (GTALSEFICILLTATLGGMFL), 133–153 (LVMIFVSLEMLSISSYLLTGY), 168–188 (LLIGAASSAIFLYGVSLLYGL), 211–231 (LALAIALVFAIAGIAFKISAV), 245–265 (PTPVVAFLSVGSKAAGFALAI), 279–299 (WHFIFTALAILSMVLGNVVAL), 307–327 (MLAYSSIAQAGFVMIGLVAGT), 335–355 (IFYLLVYLFMNLGAFTCVILF), 379–399 (LGLSVCLLSLGGIPPLAGFFG), 401–421 (IYLFWAGWQAGLYGLVLLGLI), and 469–489 (LVLSVIITSLAGILSNPLFVI).

It belongs to the complex I subunit 2 family. As to quaternary structure, NDH-1 can be composed of about 15 different subunits; different subcomplexes with different compositions have been identified which probably have different functions.

The protein localises to the cellular thylakoid membrane. The catalysed reaction is a plastoquinone + NADH + (n+1) H(+)(in) = a plastoquinol + NAD(+) + n H(+)(out). It carries out the reaction a plastoquinone + NADPH + (n+1) H(+)(in) = a plastoquinol + NADP(+) + n H(+)(out). Its function is as follows. NDH-1 shuttles electrons from an unknown electron donor, via FMN and iron-sulfur (Fe-S) centers, to quinones in the respiratory and/or the photosynthetic chain. The immediate electron acceptor for the enzyme in this species is believed to be plastoquinone. Couples the redox reaction to proton translocation, and thus conserves the redox energy in a proton gradient. Cyanobacterial NDH-1 also plays a role in inorganic carbon-concentration. The protein is NAD(P)H-quinone oxidoreductase subunit 2 of Picosynechococcus sp. (strain ATCC 27264 / PCC 7002 / PR-6) (Agmenellum quadruplicatum).